We begin with the raw amino-acid sequence, 178 residues long: Protein GrpE (178 aa).

Basic and acidic residues-rich tracts occupy residues methionine 1 to alanine 19 and serine 30 to arginine 42. Residues methionine 1–arginine 42 are disordered.

Belongs to the GrpE family. In terms of assembly, homodimer.

The protein localises to the cytoplasm. Functionally, participates actively in the response to hyperosmotic and heat shock by preventing the aggregation of stress-denatured proteins, in association with DnaK and GrpE. It is the nucleotide exchange factor for DnaK and may function as a thermosensor. Unfolded proteins bind initially to DnaJ; upon interaction with the DnaJ-bound protein, DnaK hydrolyzes its bound ATP, resulting in the formation of a stable complex. GrpE releases ADP from DnaK; ATP binding to DnaK triggers the release of the substrate protein, thus completing the reaction cycle. Several rounds of ATP-dependent interactions between DnaJ, DnaK and GrpE are required for fully efficient folding. This chain is Protein GrpE, found in Streptococcus sanguinis (strain SK36).